Here is a 484-residue protein sequence, read N- to C-terminus: RuvB-like helicase 1 (484 aa).

The span at 1–11 (MSMAASSSTAT) shows a compositional bias: low complexity. Residues 1–27 (MSMAASSSTATVQPSGIITQPPPPSTL) form a disordered region. An ATP-binding site is contributed by 87 to 94 (GPPGTGKT).

It belongs to the RuvB family. May form heterododecamers with RVB2. Component of the SWR1 chromatin remodeling complex, the INO80 chromatin remodeling complex, and of the R2TP complex.

Its subcellular location is the nucleus. It carries out the reaction ATP + H2O = ADP + phosphate + H(+). Functionally, DNA helicase which participates in several chromatin remodeling complexes, including the SWR1 and the INO80 complexes. The SWR1 complex mediates the ATP-dependent exchange of histone H2A for the H2A variant HZT1 leading to transcriptional regulation of selected genes by chromatin remodeling. The INO80 complex remodels chromatin by shifting nucleosomes and is involved in DNA repair. Also involved in pre-rRNA processing. The chain is RuvB-like helicase 1 (RVB1) from Cryptococcus neoformans var. neoformans serotype D (strain B-3501A) (Filobasidiella neoformans).